Reading from the N-terminus, the 475-residue chain is Nucleoporin-like protein amo1 (475 aa).

The C3H1-type zinc-finger motif lies at 1–25 (MVVCKYFLQNRCRYGTNCKNQHTVP). Residues 165 to 182 (DKSTSNSTVTSNQFNKPT) are compositionally biased toward polar residues. Disordered regions lie at residues 165–208 (DKST…DIFG) and 220–252 (NASP…SSFG). The span at 183–204 (QNSPFNSFSNNNNSFNNNQQAN) shows a compositional bias: low complexity. Residues 220–242 (NASPFSQNTSSNSFTGSNPVQNN) show a composition bias toward polar residues. Over residues 243 to 252 (PSSFGSSSFG) the composition is skewed to low complexity.

Its subcellular location is the nucleus. Its function is as follows. Involved in the cell polarity process where it is required for the correct termination of microtubule growth at the cell ends during interphase. This Schizosaccharomyces pombe (strain 972 / ATCC 24843) (Fission yeast) protein is Nucleoporin-like protein amo1 (amo1).